Reading from the N-terminus, the 244-residue chain is Pyridoxal phosphate homeostasis protein (244 aa).

Lysine 37 carries the post-translational modification N6-(pyridoxal phosphate)lysine.

This sequence belongs to the pyridoxal phosphate-binding protein YggS/PROSC family.

Functionally, pyridoxal 5'-phosphate (PLP)-binding protein, which may be involved in intracellular homeostatic regulation of pyridoxal 5'-phosphate (PLP), the active form of vitamin B6. The polypeptide is Pyridoxal phosphate homeostasis protein (Caenorhabditis elegans).